The chain runs to 133 residues: ATP synthase epsilon chain, chloroplastic (133 aa).

It belongs to the ATPase epsilon chain family. In terms of assembly, F-type ATPases have 2 components, CF(1) - the catalytic core - and CF(0) - the membrane proton channel. CF(1) has five subunits: alpha(3), beta(3), gamma(1), delta(1), epsilon(1). CF(0) has three main subunits: a, b and c.

Its subcellular location is the plastid. The protein resides in the chloroplast thylakoid membrane. In terms of biological role, produces ATP from ADP in the presence of a proton gradient across the membrane. This Nephroselmis olivacea (Green alga) protein is ATP synthase epsilon chain, chloroplastic.